Consider the following 109-residue polypeptide: MAYQLYRNTTLGNSLQESLDELIQSQQITPQLALQVLLQFDKAINSALAQRVRNRVNFRGSLNTYRFCDNVWTFVLNDVEFREVTELIKVDKVKIVACDGKNTGSNTTE.

Belongs to the TFIIA subunit 2 family. In terms of assembly, TFIIA is a heterodimer of the large unprocessed subunit 1 and a small subunit gamma. It was originally believed to be a heterotrimer of an alpha (p35), a beta (p19) and a gamma subunit (p12). Interacts with NCOA6 general coactivator. TFIIA forms a complex with TBP. Interacts with HSF1 (via transactivation domain). Part of TBP-based Pol II pre-initiation complex (PIC), in which Pol II core assembles with general transcription factors and other specific initiation factors including GTF2E1, GTF2E2, GTF2F1, GTF2F2, TCEA1, ERCC2, ERCC3, GTF2H2, GTF2H3, GTF2H4, GTF2H5, GTF2A1, GTF2A2, GTF2B and TBP; this large multi-subunit PIC complex mediates DNA unwinding and targets Pol II core to the transcription start site where the first phosphodiester bond forms.

Its subcellular location is the nucleus. In terms of biological role, TFIIA is a component of the transcription machinery of RNA polymerase II and plays an important role in transcriptional activation. TFIIA in a complex with TBP mediates transcriptional activity. In Rattus norvegicus (Rat), this protein is Transcription initiation factor IIA subunit 2 (Gtf2a2).